Consider the following 326-residue polypeptide: Biotin synthase (326 aa).

The Radical SAM core domain maps to 40-264 (GQVQACTLVS…VLPRSYVRLA (225 aa)). Residues C55, C59, and C62 each contribute to the [4Fe-4S] cluster site. Residues C99, C130, C190, and R262 each coordinate [2Fe-2S] cluster.

The protein belongs to the radical SAM superfamily. Biotin synthase family. Homodimer. [4Fe-4S] cluster is required as a cofactor. [2Fe-2S] cluster serves as cofactor.

It catalyses the reaction (4R,5S)-dethiobiotin + (sulfur carrier)-SH + 2 reduced [2Fe-2S]-[ferredoxin] + 2 S-adenosyl-L-methionine = (sulfur carrier)-H + biotin + 2 5'-deoxyadenosine + 2 L-methionine + 2 oxidized [2Fe-2S]-[ferredoxin]. The protein operates within cofactor biosynthesis; biotin biosynthesis; biotin from 7,8-diaminononanoate: step 2/2. In terms of biological role, catalyzes the conversion of dethiobiotin (DTB) to biotin by the insertion of a sulfur atom into dethiobiotin via a radical-based mechanism. In Halorhodospira halophila (strain DSM 244 / SL1) (Ectothiorhodospira halophila (strain DSM 244 / SL1)), this protein is Biotin synthase.